Consider the following 580-residue polypeptide: MAEGGFGADSVGRGGEKASVTRGGRWDLGSSDDESSTSTTSTDMDDLPEERKPLTGKSVKTSYIYDVPTVPTSKPWHLMHDNSLYATPRFPPRPLIRHPSEKGSIFASRLSATDDDSGDYAPMDRFAFQSPRVCGRPPLPPPNHPPPATRPADASMGDVGWADLQGLKRTPKGFLKTSTKGGSLKARGRDVGDRLRDGGFAFSPRGVKSAIGQNIKSWLGIGESSATAVPVTTQLMVPVHLIRTPVTVDYRNVYLLYLEGVMGVGKSTLVNAVCGILPQERVTSFPEPMVYWTRAFTDCYKEISHLMKSGKAGDPLTSAKIYSCQNKFSLPFRTNATAILRMMQPWNVGGGSGRGTHWCVFDRHLLSPAVVFPLMHLKHGRLSFDHFFQLLSIFRATEGDVVAILTLSSAESLRRVRARGRKNDGTVEQNYIRELAWAYHAVYCSWIMLQYITVEQMVQLCVQTTNIPEICFRSVRLAHKEETLKNLHEQSMLPMITGVLDPVRHHPVVIELCFCFFTELRKLQFIVADADKFHDDVCGLWTEIYRQILSNPAIKPRAINWPALESQSKAVNHLEETCRV.

Disordered stretches follow at residues 1-60 and 133-157; these read MAEG…KSVK and VCGR…ASMG. Residues 137-149 are compositionally biased toward pro residues; the sequence is PPLPPPNHPPPAT. 260 to 267 serves as a coordination point for ATP; the sequence is GVMGVGKS. Residue glutamate 287 is the Proton acceptor of the active site. Glutamine 325 contributes to the substrate binding site. Arginine 415 contributes to the ATP binding site. Arginine 421 contributes to the substrate binding site.

The protein belongs to the herpesviridae thymidine kinase family. In terms of assembly, homodimer.

It catalyses the reaction thymidine + ATP = dTMP + ADP + H(+). Functionally, catalyzes the transfer of the gamma-phospho group of ATP to thymidine to generate dTMP in the salvage pathway of pyrimidine synthesis. The dTMP serves as a substrate for DNA polymerase during viral DNA replication. Allows the virus to be reactivated and to grow in non-proliferative cells lacking a high concentration of phosphorylated nucleic acid precursors. The protein is Thymidine kinase of Human herpesvirus 8 type P (isolate GK18) (HHV-8).